The sequence spans 403 residues: Arginine biosynthesis bifunctional protein ArgJ (403 aa).

A compositionally biased stretch (polar residues) spans 1 to 11 (MVQSVLSSTSH). The interval 1–21 (MVQSVLSSTSHGSERADMSAA) is disordered. Residues Thr161, Lys183, Thr194, Glu273, Asn398, and Thr403 each coordinate substrate. Residue Thr194 is the Nucleophile of the active site.

It belongs to the ArgJ family. In terms of assembly, heterotetramer of two alpha and two beta chains.

Its subcellular location is the cytoplasm. It catalyses the reaction N(2)-acetyl-L-ornithine + L-glutamate = N-acetyl-L-glutamate + L-ornithine. It carries out the reaction L-glutamate + acetyl-CoA = N-acetyl-L-glutamate + CoA + H(+). The protein operates within amino-acid biosynthesis; L-arginine biosynthesis; L-ornithine and N-acetyl-L-glutamate from L-glutamate and N(2)-acetyl-L-ornithine (cyclic): step 1/1. It functions in the pathway amino-acid biosynthesis; L-arginine biosynthesis; N(2)-acetyl-L-ornithine from L-glutamate: step 1/4. Functionally, catalyzes two activities which are involved in the cyclic version of arginine biosynthesis: the synthesis of N-acetylglutamate from glutamate and acetyl-CoA as the acetyl donor, and of ornithine by transacetylation between N(2)-acetylornithine and glutamate. The protein is Arginine biosynthesis bifunctional protein ArgJ of Rhodococcoides fascians (Rhodococcus fascians).